Here is a 572-residue protein sequence, read N- to C-terminus: Serine/threonine-protein kinase pak-1 (572 aa).

Disordered stretches follow at residues 1–71 and 156–195; these read MKAF…SRPS and QPYS…QGVP. The 14-residue stretch at 67–80 folds into the CRIB domain; that stretch reads ISRPSNFEHTIHVG. The interval 81–294 is linker; it reads YDPKTGEFTG…IVSIGNPDRK (214 aa). Residues 178 to 195 are compositionally biased toward polar residues; the sequence is PMTTSTSSAGYNSKQGVP. The Protein kinase domain maps to 295–546; it reads YRKVDKIGSG…ASQLLTHPFL (252 aa). ATP contacts are provided by residues 301 to 309 and Lys324; that span reads IGSGASGSV. Asp414 (proton acceptor) is an active-site residue.

It belongs to the protein kinase superfamily. STE Ser/Thr protein kinase family. STE20 subfamily. Interacts with cdc-42 (GTP-bound form) and cedd-10 (GTP-bound form). It depends on Mg(2+) as a cofactor. Requires Mn(2+) as cofactor. Specifically colocalized with cdc-42 and ced-10 at all hypodermal cell boundaries during embryo elongation throughout the second phase of embryogenesis. Expressed mainly in pharyngeal muscles, the CAN neurons, motor neurons in the ventral nerve cord, several cells in the tail region (including the B and Y cells from L1 to adult, the hypodermal blast cell T in the L1 and some of its progeny in later stages), and the distal tip cells.

The protein resides in the cell membrane. Its subcellular location is the cytoplasm. The protein localises to the cell projection. It localises to the axon. It is found in the perikaryon. The enzyme catalyses L-seryl-[protein] + ATP = O-phospho-L-seryl-[protein] + ADP + H(+). It catalyses the reaction L-threonyl-[protein] + ATP = O-phospho-L-threonyl-[protein] + ADP + H(+). Its function is as follows. Required for hypodermal cell fusion, together with cdc-42 and ced-10, leading to embryonic body elongation, which involves dramatic cytoskeletal reorganization. Plays a redundant role with max-2 in dorsal axonal guidance in ventral cord commissural motoneurons and in P neuroblast migration. Acts probably downstream of Rho GTPases mig-2 and ced-10 to regulate these 2 processes. Involved in orientating axonal growth of HSN neurons. During gonad morphogenesis and probably in association with pix-1 and git-1, involved in the migration of distal tip cell (DTC) and in maintaining their sharp tapering morphology. In addition, plays a redundant role with max-2 in DTC-mediated guidance of gonad elongation. May phosphorylate mlc-4. The protein is Serine/threonine-protein kinase pak-1 (pak-1) of Caenorhabditis elegans.